The sequence spans 291 residues: 4-diphosphocytidyl-2-C-methyl-D-erythritol kinase (291 aa).

Lys8 is an active-site residue. 89 to 99 (PIGAGVGGGSS) serves as a coordination point for ATP. Residue Asp131 is part of the active site.

It belongs to the GHMP kinase family. IspE subfamily.

The catalysed reaction is 4-CDP-2-C-methyl-D-erythritol + ATP = 4-CDP-2-C-methyl-D-erythritol 2-phosphate + ADP + H(+). It functions in the pathway isoprenoid biosynthesis; isopentenyl diphosphate biosynthesis via DXP pathway; isopentenyl diphosphate from 1-deoxy-D-xylulose 5-phosphate: step 3/6. Its function is as follows. Catalyzes the phosphorylation of the position 2 hydroxy group of 4-diphosphocytidyl-2C-methyl-D-erythritol. The protein is 4-diphosphocytidyl-2-C-methyl-D-erythritol kinase of Chlamydia caviae (strain ATCC VR-813 / DSM 19441 / 03DC25 / GPIC) (Chlamydophila caviae).